The chain runs to 310 residues: D-alanyl-D-alanine endopeptidase (310 aa).

The first 25 residues, methionine 1 to alanine 25, serve as a signal peptide directing secretion. Serine 67 serves as the catalytic Acyl-ester intermediate. The Proton acceptor role is filled by lysine 70. Serine 124 is an active-site residue. A substrate-binding site is contributed by lysine 231.

Belongs to the peptidase S11 family. In terms of processing, pbp8 is a proteolytic product of Pbp7.

It is found in the periplasm. Cell wall formation. May play a specialized role in remodeling the cell wall. Specifically hydrolyzes the DD-diaminopimelate-alanine bonds in high-molecular-mass murein sacculi. The sequence is that of D-alanyl-D-alanine endopeptidase (pbpG) from Escherichia coli (strain K12).